Here is a 103-residue protein sequence, read N- to C-terminus: Vesicle-associated membrane protein 3 (103 aa).

Positions 1 to 25 (MSTGVPSGSSAATGSNRRLQQTQNQ) are disordered. Residues 1 to 81 (MSTGVPSGSS…KRKYWWKNCK (81 aa)) lie on the Cytoplasmic side of the membrane. In terms of domain architecture, v-SNARE coiled-coil homology spans 18–78 (RLQQTQNQVD…AKLKRKYWWK (61 aa)). Glycyl lysine isopeptide (Lys-Gly) (interchain with G-Cter in ubiquitin) cross-links involve residues K70, K72, and K81. Residues 82-102 (MWAIGISVLVIIVIIIIVWCV) traverse the membrane as a helical; Anchor for type IV membrane protein segment. S103 is a topological domain (vesicular).

The protein belongs to the synaptobrevin family. Interacts with POPDC1 (via the C-terminus cytoplasmic tail). Interacts with BCAP31; involved in VAMP3 export from the endoplasmic reticulum. Interacts with BAIAP3; this interaction is increased in the presence of calcium. Interacts with PICALM. Post-translationally, ubiquitinated by RNF167 at Lys-70, Lys-72 and Lys-81, regulating the recycling endosome pathway. In terms of processing, (Microbial infection) Targeted and hydrolyzed by C.botulinum neurotoxin type D (BoNT/D, botD) which hydrolyzes the 46-Lys-|-Leu-47 bond and probably inhibits neurotransmitter release. (Microbial infection) Targeted and hydrolyzed by C.botulinum neurotoxin type F (BoNT/F, botF) which hydrolyzes the 45-Gln-|-Lys-46 bond and probably inhibits neurotransmitter release. Post-translationally, (Microbial infection) Targeted and hydrolyzed by C.tetani toxin (tetX) which hydrolyzes the 63-Gln-|-Phe-64 bond and probably inhibits neurotransmitter release. In terms of tissue distribution, ubiquitous.

It is found in the early endosome membrane. The protein resides in the recycling endosome membrane. The protein localises to the synapse. Its subcellular location is the synaptosome. SNARE involved in vesicular transport from the late endosomes to the trans-Golgi network. In Rattus norvegicus (Rat), this protein is Vesicle-associated membrane protein 3 (Vamp3).